A 99-amino-acid polypeptide reads, in one-letter code: Putative membrane protein insertion efficiency factor (99 aa).

Belongs to the UPF0161 family.

It localises to the cell membrane. Its function is as follows. Could be involved in insertion of integral membrane proteins into the membrane. The polypeptide is Putative membrane protein insertion efficiency factor (Levilactobacillus brevis (strain ATCC 367 / BCRC 12310 / CIP 105137 / JCM 1170 / LMG 11437 / NCIMB 947 / NCTC 947) (Lactobacillus brevis)).